Here is a 158-residue protein sequence, read N- to C-terminus: MQGRLSAWLVKHGLVHRSLGFDYQGIETLQIKSEDWHSIAVISYVYGYNYLRSQCAYDVAPGGLLASVYHLTRIQYGVDQPEEVCIKVFAARRNPRIPSVFWIWKSADFQERESYDMLGISYDNHPRLKRILMPESWIGWPLRKDYIAPNFYEIQDAH.

This sequence belongs to the complex I 30 kDa subunit family. NDH is composed of at least 16 different subunits, 5 of which are encoded in the nucleus.

Its subcellular location is the plastid. The protein localises to the chloroplast thylakoid membrane. It catalyses the reaction a plastoquinone + NADH + (n+1) H(+)(in) = a plastoquinol + NAD(+) + n H(+)(out). It carries out the reaction a plastoquinone + NADPH + (n+1) H(+)(in) = a plastoquinol + NADP(+) + n H(+)(out). Its function is as follows. NDH shuttles electrons from NAD(P)H:plastoquinone, via FMN and iron-sulfur (Fe-S) centers, to quinones in the photosynthetic chain and possibly in a chloroplast respiratory chain. The immediate electron acceptor for the enzyme in this species is believed to be plastoquinone. Couples the redox reaction to proton translocation, and thus conserves the redox energy in a proton gradient. This Platanus occidentalis (Sycamore) protein is NAD(P)H-quinone oxidoreductase subunit J, chloroplastic.